The chain runs to 453 residues: Magnesium transporter MgtE (453 aa).

The Cytoplasmic segment spans residues 1–286; the sequence is MNEGQEMEEQ…ENPLKAASKR (286 aa). Positions 71, 98, 102, 136, 140, 176, 227, 230, 233, 251, and 259 each coordinate Mg(2+). CBS domains are found at residues 142–205 and 206–262; these read MTTE…IADI and LNER…EAAS. A helical transmembrane segment spans residues 287-307; it reads LPWLITLLFLGMSTASLISNY. Position 308 (Glu308) is a topological domain, extracellular. Residues 309 to 329 form a helical membrane-spanning segment; it reads SLVSEASILAVFISLITGTAG. Over 330–360 the chain is Cytoplasmic; that stretch reads NAGTQSLAVAVRRLAMKDEKDSNFGRLILSE. A helical transmembrane segment spans residues 361–381; sequence VLTGLVTGAVTGLTIMIVVGV. Residues 382–389 lie on the Extracellular side of the membrane; the sequence is WQHNLPLG. Residues 390–410 traverse the membrane as a helical segment; sequence FVIGMAMLCAITVANLAGSLI. Residues 411–427 lie on the Cytoplasmic side of the membrane; sequence PMLMDKLGFDPAVASGP. The helical transmembrane segment at 428–448 threads the bilayer; that stretch reads FITTLSDLTSVLIYFNIASMF. Asp434 contributes to the Mg(2+) binding site. Residues 449-453 are Extracellular-facing; sequence MRYFV.

The protein belongs to the SLC41A transporter family. Homodimer.

It is found in the cell membrane. It carries out the reaction Mg(2+)(in) = Mg(2+)(out). Functionally, acts as a magnesium transporter. This chain is Magnesium transporter MgtE, found in Enterococcus faecalis (strain ATCC 700802 / V583).